The primary structure comprises 276 residues: Putative pyruvate, phosphate dikinase regulatory protein (276 aa).

150–157 (GVSRTSKT) is a binding site for ADP.

It belongs to the pyruvate, phosphate/water dikinase regulatory protein family. PDRP subfamily.

It carries out the reaction N(tele)-phospho-L-histidyl/L-threonyl-[pyruvate, phosphate dikinase] + ADP = N(tele)-phospho-L-histidyl/O-phospho-L-threonyl-[pyruvate, phosphate dikinase] + AMP + H(+). The catalysed reaction is N(tele)-phospho-L-histidyl/O-phospho-L-threonyl-[pyruvate, phosphate dikinase] + phosphate + H(+) = N(tele)-phospho-L-histidyl/L-threonyl-[pyruvate, phosphate dikinase] + diphosphate. Its function is as follows. Bifunctional serine/threonine kinase and phosphorylase involved in the regulation of the pyruvate, phosphate dikinase (PPDK) by catalyzing its phosphorylation/dephosphorylation. The sequence is that of Putative pyruvate, phosphate dikinase regulatory protein from Lacticaseibacillus casei (strain BL23) (Lactobacillus casei).